The sequence spans 245 residues: Polyhedrin (245 aa).

Belongs to the polyhedrin family.

In terms of biological role, major component of the virus occlusion bodies, which are large proteinaceous structures (polyhedra), that protect the virus from the outside environment for extended periods until they are ingested by insect larvae. The polypeptide is Polyhedrin (Lepidoptera (butterflies and moths)).